The sequence spans 254 residues: NAD-dependent glycerol dehydrogenase (254 aa).

18–47 contacts NAD(+); the sequence is VVTGAASGIGKAMAELFSEKGAYVVLLDIK. The active-site Proton acceptor is the tyrosine 160. Residue lysine 164 coordinates NAD(+).

This sequence belongs to the short-chain dehydrogenases/reductases (SDR) family. Mg(2+) is required as a cofactor. The cofactor is Mn(2+).

Its subcellular location is the cytoplasm. The catalysed reaction is glycerol + NAD(+) = dihydroxyacetone + NADH + H(+). With respect to regulation, inhibited by Zn(2+). In terms of biological role, involved in the glycerol metabolism. Catalyzes the NAD-dependent oxidation of glycerol to dihydroxyacetone (glycerone). GolD specifically uses NAD. In Listeria innocua serovar 6a (strain ATCC BAA-680 / CLIP 11262), this protein is NAD-dependent glycerol dehydrogenase.